Consider the following 306-residue polypeptide: tRNA pseudouridine synthase B (306 aa).

Aspartate 48 (nucleophile) is an active-site residue.

This sequence belongs to the pseudouridine synthase TruB family. Type 1 subfamily.

It catalyses the reaction uridine(55) in tRNA = pseudouridine(55) in tRNA. Functionally, responsible for synthesis of pseudouridine from uracil-55 in the psi GC loop of transfer RNAs. The protein is tRNA pseudouridine synthase B of Ectopseudomonas mendocina (strain ymp) (Pseudomonas mendocina).